The chain runs to 395 residues: Protein BTN1 (395 aa).

The signal sequence occupies residues 1–31 (MQLEPAHLVYAAFWTFGLVNNVLYVVILTAA). The next 10 helical transmembrane spans lie at 43–63 (VVLLADVLPSFLIKLAAPFFI), 74–94 (LLVGLSTVGMMSVSLASPLFL), 96–116 (LVGVVLASFSSGLGEVTFLQL), 134–154 (GAGLVGSGLFMLLTTVLGVSV), 158–178 (LLVFAFFPLAFLGVYFYLLPP), 222–242 (PLVMPYMLPLFLVYFSEYTIN), 261–278 (FRDVYVTYGTLYQLGVFI), 291–311 (IMIPSVLQFANLVFCIAQSMS), 313–333 (ILPNVWLVFILIFYEGLLGGA), and 355–375 (LGSVGMSDSAGIVLAGLVSLW).

It belongs to the battenin family.

It localises to the vacuole membrane. Involved in vacuolar transport and vacuole pH homeostasis. Also required for cytokinesis. The protein is Protein BTN1 (BTN1) of Yarrowia lipolytica (strain CLIB 122 / E 150) (Yeast).